The chain runs to 283 residues: ATP phosphoribosyltransferase (283 aa).

Belongs to the ATP phosphoribosyltransferase family. Long subfamily. Requires Mg(2+) as cofactor.

The protein resides in the cytoplasm. It carries out the reaction 1-(5-phospho-beta-D-ribosyl)-ATP + diphosphate = 5-phospho-alpha-D-ribose 1-diphosphate + ATP. The protein operates within amino-acid biosynthesis; L-histidine biosynthesis; L-histidine from 5-phospho-alpha-D-ribose 1-diphosphate: step 1/9. Feedback inhibited by histidine. In terms of biological role, catalyzes the condensation of ATP and 5-phosphoribose 1-diphosphate to form N'-(5'-phosphoribosyl)-ATP (PR-ATP). Has a crucial role in the pathway because the rate of histidine biosynthesis seems to be controlled primarily by regulation of HisG enzymatic activity. The sequence is that of ATP phosphoribosyltransferase from Rhodococcus jostii (strain RHA1).